A 1102-amino-acid chain; its full sequence is Phosphatidylinositol 4,5-bisphosphate 3-kinase catalytic subunit gamma isoform (1102 aa).

The PI3K-ABD domain occupies 34 to 141; sequence SMELIPIEFV…PGQIHVVQRH (108 aa). The PI3K-RBD domain maps to 217–309; the sequence is NNCVFIVIHR…GEEIHLVLDT (93 aa). The C2 PI3K-type domain occupies 357–521; that stretch reads CDRKFRVKIR…NSMSISILLD (165 aa). Positions 541–723 constitute a PIK helical domain; that stretch reads DRVRAEMPNQ…AVILEAYLRG (183 aa). Residues 797–1080 form the PI3K/PI4K catalytic domain; that stretch reads VIEKCKVMAS…QIEVCRDKGW (284 aa). The G-loop stretch occupies residues 803–809; the sequence is VMASKKK. Residues 829 to 838 and 864 to 872 each bind ATP; these read GIIFKHGDDL and LLPYGCIST. The catalytic loop stretch occupies residues 943-951; that stretch reads GIGDRHNDN. Residue 961–969 coordinates ATP; it reads FHIDFGHIL. Residues 962 to 988 are activation loop; sequence HIDFGHILGNYKSFLGINKERVPFVLT. The residue at position 1024 (threonine 1024) is a Phosphothreonine; by PKA. Residue serine 1101 is modified to Phosphoserine; by autocatalysis.

The protein belongs to the PI3/PI4-kinase family. As to quaternary structure, heterodimer of a catalytic subunit PIK3CG and a PIK3R5 or PIK3R6 regulatory subunit. Interacts with GRK2 through the PIK helical domain. Interaction with GRK2 is required for targeting to agonist-occupied receptor. Interacts with PDE3B; regulates PDE3B activity and thereby cAMP levels in cells. Interacts with TPM2. Interacts with EPHA8; regulates integrin-mediated cell adhesion to substrate. Interacts with HRAS; the interaction is required for membrane recruitment and beta-gamma G protein dimer-dependent activation of the PI3K gamma complex PIK3CG:PIK3R6. Post-translationally, autophosphorylation at Ser-1101 has no effect on the phosphatidylinositol-4,5-bisphosphate 3-kinase activity.

The protein localises to the cytoplasm. It localises to the cell membrane. The enzyme catalyses a 1,2-diacyl-sn-glycero-3-phospho-(1D-myo-inositol-4,5-bisphosphate) + ATP = a 1,2-diacyl-sn-glycero-3-phospho-(1D-myo-inositol-3,4,5-trisphosphate) + ADP + H(+). The catalysed reaction is a 1,2-diacyl-sn-glycero-3-phospho-(1D-myo-inositol) + ATP = a 1,2-diacyl-sn-glycero-3-phospho-(1D-myo-inositol-3-phosphate) + ADP + H(+). It catalyses the reaction a 1,2-diacyl-sn-glycero-3-phospho-(1D-myo-inositol 4-phosphate) + ATP = a 1,2-diacyl-sn-glycero-3-phospho-(1D-myo-inositol-3,4-bisphosphate) + ADP + H(+). It carries out the reaction L-seryl-[protein] + ATP = O-phospho-L-seryl-[protein] + ADP + H(+). It functions in the pathway phospholipid metabolism; phosphatidylinositol phosphate biosynthesis. Activated by both the alpha and the beta-gamma G proteins following stimulation of G protein-coupled receptors (GPCRs). Activation by GPCRs is assisted by the regulatory subunits (PIK3R5 or PIK3R6) leading to the translocation from the cytosol to the plasma membrane and to kinase activation. When bound to PIK3R5 the PI3K activity of PIK3CG could be activated greater than 100-fold by the beta-gamma G proteins. In terms of biological role, phosphoinositide-3-kinase (PI3K) that phosphorylates PtdIns(4,5)P2 (Phosphatidylinositol 4,5-bisphosphate) to generate phosphatidylinositol 3,4,5-trisphosphate (PIP3). PIP3 plays a key role by recruiting PH domain-containing proteins to the membrane, including AKT1 and PDPK1, activating signaling cascades involved in cell growth, survival, proliferation, motility and morphology. Links G-protein coupled receptor activation to PIP3 production. Involved in immune, inflammatory and allergic responses. Modulates leukocyte chemotaxis to inflammatory sites and in response to chemoattractant agents. May control leukocyte polarization and migration by regulating the spatial accumulation of PIP3 and by regulating the organization of F-actin formation and integrin-based adhesion at the leading edge. Controls motility of dendritic cells. Participates in T-lymphocyte migration. Regulates T-lymphocyte proliferation and cytokine production. Required for B-lymphocyte development and signaling. Together with other PI3Ks are involved in the oxidative burst produced by neutrophils in response to chemotactic agents. Together with PIK3CD regulate neutrophil extravasation. Together with PIK3CB promotes platelet aggregation and thrombosis. Regulates alpha-IIb/beta-3 integrins (ITGA2B/ ITGB3) adhesive function in platelets downstream of P2Y12 through a lipid kinase activity-independent mechanism. May have also a lipid kinase activity-dependent function in platelet aggregation. Involved in endothelial progenitor cell migration. Negative regulator of cardiac contractility. Modulates cardiac contractility by anchoring protein kinase A (PKA) and PDE3B activation, reducing cAMP levels. Regulates cardiac contractility also by promoting beta-adrenergic receptor internalization by binding to GRK2 and by non-muscle tropomyosin phosphorylation. Also has serine/threonine protein kinase activity: both lipid and protein kinase activities are required for beta-adrenergic receptor endocytosis. May also have a scaffolding role in modulating cardiac contractility. Contribute to cardiac hypertrophy under pathological stress. Through simultaneous binding of PDE3B to RAPGEF3 and PIK3R6 is assembled in a signaling complex in which the PI3K gamma complex is activated by RAPGEF3 and which is involved in angiogenesis. In neutrophils, participates in a phospholipase C-activating N-formyl peptide-activated GPCR (G protein-coupled receptor) signaling pathway downstream of RASGRP4-mediated Ras-activation, to promote neutrophil functional responses. In Sus scrofa (Pig), this protein is Phosphatidylinositol 4,5-bisphosphate 3-kinase catalytic subunit gamma isoform (PIK3CG).